Consider the following 459-residue polypeptide: MNRLPSSASALACSAHALNLIEKRTLDHEEMKALNREVIEYFKEHVNPGFLEYRKSVTAGGDYGAVEWQAGGLNTLVDTQGQEFIDCLGGFGIFNVGHRNPVVVSAVQNQLAKQPLHSQELLDPLRAMLAKTLAALTPGKLKYSFFCNSGTESVEAALKLAKAYQSPRGKFTFIATSGAFHGKSLGALSATAKSTFRKPFMPLLPGFRHVPFGNIEAMRTALNECKKTGDDVAAVILEPIQGEGGVILPPPGYLTAVRKLCDEFGALMILDEVQTGMGRTGKMFACEHENVQPDILCLAKALGGGVMPIGATIATEEVFSVLFDNPFLHTTTFGGNPLACAAALATINVLLEQNLPAQAEQKGDMLLDGFRQLAREYPDLVQEARGKGMLMAIEFVDNEIGYNFASEMFRQRVLVAGTLNNAKTIRIEPPLTLTIEQCELVIKAARKALAAMRVSVEEA.

Residues 150–151 and Q274 each bind pyridoxal 5'-phosphate; that span reads GT. Residue K300 is modified to N6-(pyridoxal phosphate)lysine. T332 is a pyridoxal 5'-phosphate binding site.

It belongs to the class-III pyridoxal-phosphate-dependent aminotransferase family. Putrescine aminotransferase subfamily. The cofactor is pyridoxal 5'-phosphate.

It catalyses the reaction an alkane-alpha,omega-diamine + 2-oxoglutarate = an omega-aminoaldehyde + L-glutamate. The catalysed reaction is putrescine + 2-oxoglutarate = 1-pyrroline + L-glutamate + H2O. The enzyme catalyses cadaverine + 2-oxoglutarate = 5-aminopentanal + L-glutamate. Its pathway is amine and polyamine degradation; putrescine degradation; 4-aminobutanal from putrescine (transaminase route): step 1/1. Its function is as follows. Catalyzes the aminotransferase reaction from putrescine to 2-oxoglutarate, leading to glutamate and 4-aminobutanal, which spontaneously cyclizes to form 1-pyrroline. This is the first step in one of two pathways for putrescine degradation, where putrescine is converted into 4-aminobutanoate (gamma-aminobutyrate or GABA) via 4-aminobutanal. Also functions as a cadaverine transaminase in a a L-lysine degradation pathway to succinate that proceeds via cadaverine, glutarate and L-2-hydroxyglutarate. The protein is Putrescine aminotransferase of Escherichia coli O81 (strain ED1a).